The chain runs to 464 residues: MISIAFKHYGFYSPSSNEILETIQMVRMEHLDIRTVTMGISLRDCSHPDPEVFNENIYEKITSRAKELIRTTNEIQSLYGIPIINRRISVTPISIAAESCRSQDFVSVAKTMDEAAKEAGVDFIGGFSALVHKGETRGDLKLINSIPEALASTEKVCSSVNVATTKAGINMDAVGLMGKVIKKTAELTAERDGIGCAKLVVFANAPEDNPFMAGAFHGIGEPECVINVGVSGPGAVNTAVCELENPNLTEISETIKKTAFKITRMGEMVGKEVSRRLGVEFGILDLSLAPTPAIGDSVAAILEAMGLERCGTHGTTAALALLNDAVKKGGAMASSSVGGLSGAFIPVSEDAGMIEAVKAGSLTLEKLEAMTSVCSVGLDMIAVPGDTSAATLSAIIADEMAVGVINKKTTAVRIIPAPGKAVGDSVEFGGLLGSAPIMPVSSFSSETFVNRGGRIPAPIQSLTN.

It belongs to the UPF0210 family.

The protein is UPF0210 protein MA_1691 of Methanosarcina acetivorans (strain ATCC 35395 / DSM 2834 / JCM 12185 / C2A).